The chain runs to 172 residues: Translation initiation factor IF-3 (172 aa).

The protein belongs to the IF-3 family. In terms of assembly, monomer.

Its subcellular location is the cytoplasm. IF-3 binds to the 30S ribosomal subunit and shifts the equilibrium between 70S ribosomes and their 50S and 30S subunits in favor of the free subunits, thus enhancing the availability of 30S subunits on which protein synthesis initiation begins. The sequence is that of Translation initiation factor IF-3 from Haemophilus influenzae (strain ATCC 51907 / DSM 11121 / KW20 / Rd).